Consider the following 296-residue polypeptide: Ribosomal protein L11 methyltransferase (296 aa).

Residues Thr146, Gly167, Asp189, and Asn231 each coordinate S-adenosyl-L-methionine.

Belongs to the methyltransferase superfamily. PrmA family.

Its subcellular location is the cytoplasm. It carries out the reaction L-lysyl-[protein] + 3 S-adenosyl-L-methionine = N(6),N(6),N(6)-trimethyl-L-lysyl-[protein] + 3 S-adenosyl-L-homocysteine + 3 H(+). Methylates ribosomal protein L11. In Haemophilus influenzae (strain ATCC 51907 / DSM 11121 / KW20 / Rd), this protein is Ribosomal protein L11 methyltransferase.